The chain runs to 257 residues: Homeobox protein goosecoid (257 aa).

The segment at residues 160 to 219 is a DNA-binding region (homeobox); it reads KRRHRTIFTDEQLEALENLFQETKYPDVGTREQLARKVHLREEKVEVWFKNRRAKWRRQK. A disordered region spans residues 213 to 257; that stretch reads AKWRRQKRSSSEESENAEKWNKTSSSKASPEKREEEGKSDLDSDS. Residues 241–257 show a composition bias toward basic and acidic residues; sequence SPEKREEEGKSDLDSDS.

Belongs to the paired homeobox family. Bicoid subfamily.

The protein localises to the nucleus. Functionally, regulates chordin (CHRD). May play a role in spatial programing within discrete embryonic fields or lineage compartments during organogenesis. In concert with NKX3-2, plays a role in defining the structural components of the middle ear; required for the development of the entire tympanic ring. Probably involved in the regulatory networks that define neural crest cell fate specification and determine mesoderm cell lineages in mammals. The protein is Homeobox protein goosecoid (GSC) of Gorilla gorilla gorilla (Western lowland gorilla).